The chain runs to 314 residues: Deacetoxycephalosporin C synthase (314 aa).

Positions 156–269 (DCEPLLRLRY…RTSSVFFLRP (114 aa)) constitute a Fe2OG dioxygenase domain.

It belongs to the iron/ascorbate-dependent oxidoreductase family. The cofactor is Fe cation. L-ascorbate is required as a cofactor.

The catalysed reaction is penicillin N + 2-oxoglutarate + O2 = deacetoxycephalosporin C + succinate + CO2 + H2O. The protein operates within antibiotic biosynthesis; cephalosporin C biosynthesis. Functionally, catalyzes the step from penicillin N to deacetoxy-cephalosporin C. The chain is Deacetoxycephalosporin C synthase (cefE) from Amycolatopsis lactamdurans (Nocardia lactamdurans).